The primary structure comprises 528 residues: Na(+)/H(+) antiporter NhaB (528 aa).

Helical transmembrane passes span 10–30 (IGNF…SFLI), 63–83 (YPLQ…MTSA), 96–116 (VLLL…LLLF), 131–165 (VSLM…FYAI), 204–224 (LLMH…VGEP), 240–260 (FVVR…LTCL), 305–325 (VLVG…VGLV), 359–379 (LAVF…APVI), 391–411 (LVIF…VFVG), 449–469 (ATPN…APLI), and 476–496 (MVWM…LAIE).

It belongs to the NhaB Na(+)/H(+) (TC 2.A.34) antiporter family.

It is found in the cell inner membrane. The catalysed reaction is 2 Na(+)(in) + 3 H(+)(out) = 2 Na(+)(out) + 3 H(+)(in). In terms of biological role, na(+)/H(+) antiporter that extrudes sodium in exchange for external protons. The sequence is that of Na(+)/H(+) antiporter NhaB from Shewanella sp. (strain W3-18-1).